We begin with the raw amino-acid sequence, 1126 residues long: Probable serine/threonine-protein kinase DDB_G0280111 (1126 aa).

The Protein kinase domain maps to 16 to 295; it reads LNFVKQIAEG…NLLRNQQPLF (280 aa). ATP is bound by residues 22–30 and K45; that span reads IAEGGFSYV. Catalysis depends on D147, which acts as the Proton acceptor. Low complexity predominate over residues 314–333; that stretch reads NNNNNINNNNNNNIVNGKNI. 4 disordered regions span residues 314-469, 760-901, 944-1072, and 1095-1126; these read NNNN…NGNN, LNLN…QQQQ, TPSS…DEVR, and NKQS…GLLN. Over residues 347–364 the composition is skewed to pro residues; that stretch reads TPTPPPPAPSQSPSPSPS. Residues 367 to 390 are compositionally biased toward polar residues; sequence VVNNIENNSNGLEHSNSNGNISQP. Low complexity-rich tracts occupy residues 413-422, 432-469, and 760-795; these read PPNNSNNSFD, NLSN…NGNN, and LNLN…LNSS. 2 stretches are compositionally biased toward polar residues: residues 796 to 825 and 833 to 845; these read FDNI…SESG and EPTS…YQQS. A compositionally biased stretch (low complexity) spans 846–856; that stretch reads NNNNNNNNNNN. The segment covering 857 to 866 has biased composition (polar residues); it reads GTPISLTPGS. Low complexity-rich tracts occupy residues 886–901, 953–971, and 1003–1035; these read QQQQ…QQQQ, PSTG…QQSQ, and NVNI…NPNL. Positions 1095–1105 are enriched in polar residues; sequence NKQSRMNNPNN. The span at 1108-1126 shows a compositional bias: acidic residues; sequence DEGDSGFGDGEEEDEGLLN.

This sequence belongs to the protein kinase superfamily. Ser/Thr protein kinase family.

The catalysed reaction is L-seryl-[protein] + ATP = O-phospho-L-seryl-[protein] + ADP + H(+). It carries out the reaction L-threonyl-[protein] + ATP = O-phospho-L-threonyl-[protein] + ADP + H(+). The protein is Probable serine/threonine-protein kinase DDB_G0280111 of Dictyostelium discoideum (Social amoeba).